The sequence spans 244 residues: tRNA1(Val) (adenine(37)-N6)-methyltransferase (244 aa).

This sequence belongs to the methyltransferase superfamily. tRNA (adenine-N(6)-)-methyltransferase family.

Its subcellular location is the cytoplasm. It catalyses the reaction adenosine(37) in tRNA1(Val) + S-adenosyl-L-methionine = N(6)-methyladenosine(37) in tRNA1(Val) + S-adenosyl-L-homocysteine + H(+). Its function is as follows. Specifically methylates the adenine in position 37 of tRNA(1)(Val) (anticodon cmo5UAC). In Photorhabdus laumondii subsp. laumondii (strain DSM 15139 / CIP 105565 / TT01) (Photorhabdus luminescens subsp. laumondii), this protein is tRNA1(Val) (adenine(37)-N6)-methyltransferase.